The chain runs to 150 residues: S-protein homolog 24 (150 aa).

N122 carries N-linked (GlcNAc...) asparagine glycosylation.

The protein belongs to the plant self-incompatibility (S1) protein family.

It localises to the secreted. This is S-protein homolog 24 from Arabidopsis thaliana (Mouse-ear cress).